A 215-amino-acid polypeptide reads, in one-letter code: Protein ERP2 (215 aa).

Residues 1-25 (MIKSTIALPSFFIVLILALVNSVAA) form the signal peptide. Residues 26-182 (SSSYAPVAIS…TVNSTESRLT (157 aa)) lie on the Lumenal side of the membrane. Residues 41-123 (KECLYYDMVT…LKKVEITLEK (83 aa)) form the GOLD domain. Residues 183-203 (WLSILIIIIIAVISIAQVLLI) form a helical membrane-spanning segment. At 204–215 (QFLFTGRQKNYV) the chain is on the cytoplasmic side.

Belongs to the EMP24/GP25L family. Associates with EMP24, ERV25 and ERP1.

It localises to the endoplasmic reticulum membrane. Functionally, involved in vesicular protein trafficking. This Saccharomyces cerevisiae (strain ATCC 204508 / S288c) (Baker's yeast) protein is Protein ERP2 (ERP2).